The sequence spans 156 residues: Small ribosomal subunit protein uS7 (156 aa).

Belongs to the universal ribosomal protein uS7 family. As to quaternary structure, part of the 30S ribosomal subunit. Contacts proteins S9 and S11.

In terms of biological role, one of the primary rRNA binding proteins, it binds directly to 16S rRNA where it nucleates assembly of the head domain of the 30S subunit. Is located at the subunit interface close to the decoding center, probably blocks exit of the E-site tRNA. The polypeptide is Small ribosomal subunit protein uS7 (Prochlorococcus marinus (strain SARG / CCMP1375 / SS120)).